The chain runs to 396 residues: Flavohemoprotein (396 aa).

A Globin domain is found at 1–136; it reads MLDAQTIATV…LANVFIHREA (136 aa). H85 lines the heme b pocket. Active-site charge relay system residues include Y95 and E135. The reductase stretch occupies residues 147–396; it reads GGWEGTRPFR…YECFGPHKVL (250 aa). Positions 150-255 constitute an FAD-binding FR-type domain; sequence EGTRPFRIVA…AAPAGDFFMN (106 aa). Residues Y188 and 204–207 each bind FAD; that span reads RQYS. 268 to 273 is a binding site for NADP(+); sequence GVGQTP. 389-392 is a binding site for FAD; it reads CFGP.

The protein belongs to the globin family. Two-domain flavohemoproteins subfamily. This sequence in the C-terminal section; belongs to the flavoprotein pyridine nucleotide cytochrome reductase family. The cofactor is heme b. Requires FAD as cofactor.

It catalyses the reaction 2 nitric oxide + NADPH + 2 O2 = 2 nitrate + NADP(+) + H(+). The enzyme catalyses 2 nitric oxide + NADH + 2 O2 = 2 nitrate + NAD(+) + H(+). Is involved in NO detoxification in an aerobic process, termed nitric oxide dioxygenase (NOD) reaction that utilizes O(2) and NAD(P)H to convert NO to nitrate, which protects the bacterium from various noxious nitrogen compounds. Therefore, plays a central role in the inducible response to nitrosative stress. This chain is Flavohemoprotein, found in Salmonella typhi.